The sequence spans 94 residues: MDPRYWGSSFWIVIFIIITKFKHDIETCKRHLYNICKALPCAECKDHALQAIQKNNIMSSNDINYIYFFFISLYNNLVFNPERCIDIKKVKKLI.

The ERV/ALR sulfhydryl oxidase domain maps to 1–94 (MDPRYWGSSF…IDIKKVKKLI (94 aa)). C41 and C44 are disulfide-bonded.

It belongs to the poxviruses E10 family. FAD serves as cofactor.

The catalysed reaction is 2 R'C(R)SH + O2 = R'C(R)S-S(R)CR' + H2O2. In terms of biological role, FAD-dependent sulfhydryl oxidase that catalyzes disulfide bond formation. The polypeptide is Probable FAD-linked sulfhydryl oxidase FPV093 (Fowlpox virus (strain NVSL) (FPV)).